The chain runs to 196 residues: NAD(P)H-quinone oxidoreductase subunit I (196 aa).

2 4Fe-4S ferredoxin-type domains span residues 55-84 and 95-124; these read GRIH…VDWE and KHYS…MTEE. 8 residues coordinate [4Fe-4S] cluster: Cys64, Cys67, Cys70, Cys74, Cys104, Cys107, Cys110, and Cys114. Positions 170-196 are disordered; sequence SPHDLPEGSQRSGKRPEEIIEEAEASS.

It belongs to the complex I 23 kDa subunit family. As to quaternary structure, NDH-1 is composed of at least 11 different subunits. [4Fe-4S] cluster is required as a cofactor.

The protein resides in the cellular thylakoid membrane. The enzyme catalyses a plastoquinone + NADH + (n+1) H(+)(in) = a plastoquinol + NAD(+) + n H(+)(out). It carries out the reaction a plastoquinone + NADPH + (n+1) H(+)(in) = a plastoquinol + NADP(+) + n H(+)(out). In terms of biological role, NDH-1 shuttles electrons from an unknown electron donor, via FMN and iron-sulfur (Fe-S) centers, to quinones in the respiratory and/or the photosynthetic chain. The immediate electron acceptor for the enzyme in this species is believed to be plastoquinone. Couples the redox reaction to proton translocation, and thus conserves the redox energy in a proton gradient. The sequence is that of NAD(P)H-quinone oxidoreductase subunit I from Crocosphaera subtropica (strain ATCC 51142 / BH68) (Cyanothece sp. (strain ATCC 51142)).